Reading from the N-terminus, the 308-residue chain is Ceramide synthase 1 LOH3 (308 aa).

The next 6 helical transmembrane spans lie at 25-45 (VLPL…RFVF), 82-102 (CVYY…EPWF), 128-148 (LLYM…VFWE), 154-174 (FGVS…SYVC), 213-233 (FILF…FWIL), and 258-278 (YMFN…WVLM). In terms of domain architecture, TLC spans 73-287 (RKFKESAWKC…MYRMLVKQIQ (215 aa)). 2 positions are modified to phosphoserine: S298 and S300.

As to expression, expressed ubiquitously at low levels. Not observed in pollen.

The protein localises to the endoplasmic reticulum membrane. The enzyme catalyses (4R)-hydroxysphinganine + a fatty acyl-CoA = an N-acyl-(4R)-4-hydroxysphinganine + CoA + H(+). It carries out the reaction a sphingoid base + tetracosanoyl-CoA = an N-tetracosanoyl-sphingoid base + CoA + H(+). The catalysed reaction is (4R)-hydroxysphinganine + hexadecanoyl-CoA = N-hexadecanoyl-(4R)-hydroxysphinganine + CoA + H(+). It catalyses the reaction (4R)-hydroxysphinganine + octadecanoyl-CoA = N-octadecanoyl-(4R)-hydroxysphinganine + CoA + H(+). The enzyme catalyses (4R)-hydroxysphinganine + eicosanoyl-CoA = N-eicosanoyl-(4R)-hydroxysphinganine + CoA + H(+). It carries out the reaction docosanoyl-CoA + (4R)-hydroxysphinganine = N-docosanoyl-(4R)-hydroxysphinganine + CoA + H(+). The catalysed reaction is hexacosanoyl-CoA + (4R)-hydroxysphinganine = N-hexacosanoyl-(4R)-hydroxysphinganine + CoA + H(+). It catalyses the reaction tetracosanoyl-CoA + (4R)-hydroxysphinganine = N-tetracosanoyl-(4R)-hydroxysphinganine + CoA + H(+). The enzyme catalyses tetracosanoyl-CoA + sphing-4-enine = N-tetracosanoyl-sphing-4-enine + CoA + H(+). It carries out the reaction sphinga-(4E,8Z)-dienine + tetracosanoyl-CoA = N-tetracosanoylsphinga-(4E,8Z)-dienine + CoA + H(+). The catalysed reaction is sphinga-(4E,8E)-dienine + tetracosanoyl-CoA = N-tetracosanoylsphinga-(4E,8E)-dienine + CoA + H(+). It catalyses the reaction (4R)-hydroxysphing-(8Z)-enine + tetracosanoyl-CoA = N-tetracosanoyl-(4R)-hydroxysphing-(8Z)-enine + CoA + H(+). The enzyme catalyses (4R)-hydroxysphing-(8E)-enine + tetracosanoyl-CoA = N-tetracosanoyl-(4R)-hydroxysphing-(8E)-enine + CoA + H(+). Its pathway is sphingolipid metabolism. Its activity is regulated as follows. Inhibited by the mycotoxin fumonisin B(1), a sphingosine analog mycotoxins produced by pathogenic fungi. Repressed by divalent cation such as magnesium Mg(2+), copper Cu(2+), zinc Zn(2+), manganese Mn(2+), calcium Ca(2+) and cobalt Co(2+). Essential for plant growth, promotes cell division in root meristems. Catalyzes the biosynthesis of ceramide sphingolipids with C(16) to C(28) fatty acids, structural membrane lipids involved in membrane trafficking (e.g. early endosomes) and cell polarity (e.g. polar auxin transport related proteins); active on a broad substrate spectrum, both regarding chain lengths of fatty acids and the sphingoid base, such as long-chain base (LCB) phytosphingosine (t18:0). Mediates resistance to sphinganine-analog mycotoxins (SAMs, e.g. fumonisin B(1)) by restoring the sphingolipid biosynthesis. Could salvage the transport of GPI-anchored proteins from the endoplasmic reticulum to the Golgi apparatus in ceramides-depleted cells after SAM exposure. Contributes to hypoxic conditions tolerance (e.g. submergences), especially in the dark, by promoting the formation of very-long-chain (VLC) ceramide species (22:1, 24:1 and 26:1) and of VLC unsaturated ceramides, which are modulating CTR1-mediated ethylene signaling leading to endoplasmic reticulum (ER)-to-nucleus translocation of EIN2 and EIN3. This is Ceramide synthase 1 LOH3 from Arabidopsis thaliana (Mouse-ear cress).